Consider the following 393-residue polypeptide: Glutamyl-tRNA reductase (393 aa).

Residues 47–50 (TCSR), Ser-98, 103–105 (ETD), and Gln-109 each bind substrate. The active-site Nucleophile is Cys-48. Position 177–182 (177–182 (GAGAVG)) interacts with NADP(+).

Belongs to the glutamyl-tRNA reductase family. As to quaternary structure, homodimer.

The catalysed reaction is (S)-4-amino-5-oxopentanoate + tRNA(Glu) + NADP(+) = L-glutamyl-tRNA(Glu) + NADPH + H(+). It participates in porphyrin-containing compound metabolism; protoporphyrin-IX biosynthesis; 5-aminolevulinate from L-glutamyl-tRNA(Glu): step 1/2. Functionally, catalyzes the NADPH-dependent reduction of glutamyl-tRNA(Glu) to glutamate 1-semialdehyde (GSA). This Pyrobaculum neutrophilum (strain DSM 2338 / JCM 9278 / NBRC 100436 / V24Sta) (Thermoproteus neutrophilus) protein is Glutamyl-tRNA reductase.